Consider the following 287-residue polypeptide: Pantothenate synthetase (287 aa).

30–37 (MGYLHEGH) is a binding site for ATP. Residue His-37 is the Proton donor of the active site. Gln-61 serves as a coordination point for (R)-pantoate. Beta-alanine is bound at residue Gln-61. Residue 150-153 (GMKD) coordinates ATP. Gln-156 contacts (R)-pantoate. ATP contacts are provided by residues Val-179 and 187–190 (LSSR).

The protein belongs to the pantothenate synthetase family. In terms of assembly, homodimer.

The protein resides in the cytoplasm. It catalyses the reaction (R)-pantoate + beta-alanine + ATP = (R)-pantothenate + AMP + diphosphate + H(+). It functions in the pathway cofactor biosynthesis; (R)-pantothenate biosynthesis; (R)-pantothenate from (R)-pantoate and beta-alanine: step 1/1. Functionally, catalyzes the condensation of pantoate with beta-alanine in an ATP-dependent reaction via a pantoyl-adenylate intermediate. The chain is Pantothenate synthetase from Coprothermobacter proteolyticus (strain ATCC 35245 / DSM 5265 / OCM 4 / BT).